Here is a 144-residue protein sequence, read N- to C-terminus: uncharacterized protein (144 aa).

The N-acetyltransferase domain occupies 2-144 (IELDAINPNN…EDSVLLSKKL (143 aa)).

It belongs to the acetyltransferase family.

Its subcellular location is the cytoplasm. It is found in the nucleus. This is an uncharacterized protein from Schizosaccharomyces pombe (strain 972 / ATCC 24843) (Fission yeast).